Here is a 72-residue protein sequence, read N- to C-terminus: Heat-stable enterotoxin A2 (72 aa).

The signal sequence occupies residues methionine 1 to alanine 19. Positions glutamine 20–methionine 53 are excised as a propeptide. Disulfide bonds link cysteine 59–cysteine 64, cysteine 60–cysteine 68, and cysteine 63–cysteine 71.

It belongs to the heat-stable enterotoxin family.

Its subcellular location is the secreted. In terms of biological role, toxin which activates the particulate form of guanylate cyclase and increases cyclic GMP levels within the host intestinal epithelial cells. The protein is Heat-stable enterotoxin A2 (sta2) of Escherichia coli.